The following is a 229-amino-acid chain: Potassium/proton antiporter CemA (229 aa).

The next 3 membrane-spanning stretches (helical) occupy residues 6–26 (AFIPFFYFTSIVFLPWLISLC), 107–127 (ILHFSTNLISFVILSGYSFWG), and 189–209 (ILSGLVSTFPVILDTIFKYWI).

The protein belongs to the CemA family.

The protein resides in the plastid. It localises to the chloroplast inner membrane. The enzyme catalyses K(+)(in) + H(+)(out) = K(+)(out) + H(+)(in). Contributes to K(+)/H(+) antiport activity by supporting proton efflux to control proton extrusion and homeostasis in chloroplasts in a light-dependent manner to modulate photosynthesis. Prevents excessive induction of non-photochemical quenching (NPQ) under continuous-light conditions. Indirectly promotes efficient inorganic carbon uptake into chloroplasts. This chain is Potassium/proton antiporter CemA, found in Olimarabidopsis pumila (Dwarf rocket).